Consider the following 345-residue polypeptide: 3-isopropylmalate dehydrogenase (345 aa).

74-87 (GPKWDGLPRKIRPE) contributes to the NAD(+) binding site. Arg94, Arg104, Arg132, and Asp217 together coordinate substrate. Mg(2+) contacts are provided by Asp217, Asp241, and Asp245. NAD(+) is bound at residue 274-286 (GSAPDIAGKGLAN).

This sequence belongs to the isocitrate and isopropylmalate dehydrogenases family. LeuB type 1 subfamily. Homodimer. It depends on Mg(2+) as a cofactor. Requires Mn(2+) as cofactor.

It localises to the cytoplasm. The enzyme catalyses (2R,3S)-3-isopropylmalate + NAD(+) = 4-methyl-2-oxopentanoate + CO2 + NADH. Its pathway is amino-acid biosynthesis; L-leucine biosynthesis; L-leucine from 3-methyl-2-oxobutanoate: step 3/4. Functionally, catalyzes the oxidation of 3-carboxy-2-hydroxy-4-methylpentanoate (3-isopropylmalate) to 3-carboxy-4-methyl-2-oxopentanoate. The product decarboxylates to 4-methyl-2 oxopentanoate. This is 3-isopropylmalate dehydrogenase (leuB) from Thermus thermophilus (strain ATCC BAA-163 / DSM 7039 / HB27).